Consider the following 208-residue polypeptide: Platelet glycoprotein Ib beta chain (208 aa).

A signal peptide spans 1–26; it reads MGSGPRGAVSLLLLMLAPPSCPAADC. 2 disulfides stabilise this stretch: C26–C32 and C30–C39. The region spanning 27–55 is the LRRNT domain; sequence PAPCSCAGTLVDCGRRGLTWASLPTSFPV. Residues 27–147 are Extracellular-facing; that stretch reads PAPCSCAGTL…RAACAPGPLC (121 aa). Residues 60–83 form an LRR repeat; the sequence is LVLTGNNLTALPSGLLDALPAVRT. The N-linked (GlcNAc...) asparagine glycan is linked to N66. The LRRCT domain occupies 89 to 143; the sequence is NPWRCDCRLVPLRAWLAGRPERAPYRDLRCVAPPAVRGRLLPYLAEDDVRAACAP. 2 cysteine pairs are disulfide-bonded: C93–C118 and C95–C141. Residues 148–172 traverse the membrane as a helical segment; sequence WGALAAELALLGLGLLHALLLVLLL. Residues 173-208 lie on the Cytoplasmic side of the membrane; the sequence is CRLRRLRARARARARAALRLSLTDPLVAEQDGTDES. Residue S193 is modified to Phosphoserine; by PKA. Phosphothreonine is present on T195.

In terms of assembly, two GP-Ib beta are disulfide-linked to one GP-Ib alpha. GP-IX is complexed with the GP-Ib heterodimer via a non covalent linkage. Interacts with TRAF4.

The protein resides in the membrane. Gp-Ib, a surface membrane protein of platelets, participates in the formation of platelet plugs by binding to von Willebrand factor, which is already bound to the subendothelium. In Papio cynocephalus (Yellow baboon), this protein is Platelet glycoprotein Ib beta chain (GP1BB).